The following is an 843-amino-acid chain: MAAYLFTCSILQTLSEAGKIEIAEDKLLHYLGELPGTPNGPVQLLENICTILEGQGRATHGNVIRHVLNIVVTEQELGGLGISGKSWEEVDEHTLHEIKFLTDAWLTAAESRAAARHLPQPLKQQDTRRLPMNLAEKILAHHAFSVPRRERVVAGDLLRVSIDWVIASELSWVGMKHSVTSLDMKPSAWRNDRFWLSGDHTVDPRTYHDKRVQALIKGLESAKRDLKMTENQGSNYTIMHTEFVRERAEPGMLVLGSDSHTCSAGAVSALAIGLGAGDVMAGLATGETWFKVPECIRINFTGQPAWYIGGKDVILSVLKQLKRNTYAAERIVEFGGAGAKLLSCDARFAISNMCTVRDPNDRPELKPTADDRSTSRNLVLLQAFLFPTVSLNRLSIAAGARYEGASYASTFEIDLGEVEPFIAIYPSPDQVCPVAERTGMRFDGCFIGACTTTEEDLVLAALVLEAGLKRGLTLEKGKRIVVPGSLPIVKNLRALGLLDIYKACGYEQPAPGCSLCLGIGADVAEAGSQWLSSQNRNFQNRMGRGAVGHICSAATVAASSFNMTLTDPCDLLNDVSETTFKEYLARCKVARGGSESKLAGGKQANNVQYIEPCLLGENARSAEGEVPALEAAAVSLDDARLGSINSRIYKLDDYVDTDALPQIIPAPACVGSPTDEMLGSHCFELTNPDFRDYVRSGHRVIVGGRAFGCGSSREEAPRALKGLGVQCVIARSFAFIFGRNMPNIGMLAIVLTDEAFYKAAQQGENIEVDVEGRVVHVAGQTFPFSLDDMELQLIRNRGLAASYQKLGSKVFAALCQKPAPLPISALADATLAQGGSIGRQMDW.

Residue 258-260 (DSH) coordinates substrate. [4Fe-4S] cluster is bound by residues Cys-450, Cys-513, and Cys-516. Substrate contacts are provided by residues Arg-536, Arg-541, and 712-713 (SR).

The protein belongs to the aconitase/IPM isomerase family.

It participates in mycotoxin biosynthesis. In terms of biological role, aconitase; part of the gene clusters that mediate the biosynthesis of AM-toxins, host-selective toxins (HSTs) causing Alternaria blotch on apple, a worldwide distributed disease. AM-toxins are cyclic depsipeptides containing the 3 residues 2-hydroxy-isovaleric acid (2-HIV), dehydroalanine, L-alanine which are common for all 3 AM-toxins I to III. The fourth precursor is L-alpha-amino-methoxyphenyl-valeric acid (L-Amv) for AM-toxin I, L-alpha-amino-phenyl-valeric acid (L-Apv) for AM-toxin II, and L-alpha-amino-hydroxyphenyl-valeric acid (L-Ahv) for AM-toxin III. AM-toxins have two target sites for affecting susceptible apple cells; they cause invagination of the plasma membrane and electrolyte loss and chloroplast disorganization. The non-ribosomal peptide synthetase AMT1 contains 4 catalytic modules and is responsible for activation of each residue in AM-toxin. The aldo-keto reductase AMT2 catalyzes the conversion of 2-keto-isovaleric acid (2-KIV) to 2-hydroxy-isovaleric acid (2-HIV), one of the precursor residues incorporated by AMT1 during AM-toxin biosynthesis, by reduction of its ketone to an alcohol. The cytochrome P450 monooxygenase AMT3 and the thioesterase AMT4 are also important for AM-toxin production, but their exact function within the AM-toxin biosynthesis are not known yet. Up to 21 proteins (including AMT1 to AMT4) are predicted to be involved in AM-toxin biosynthesis since their expression ishighly up-regulated in AM-toxin-producing cultures. The sequence is that of Aconitase AMT8-2 from Alternaria alternata (Alternaria rot fungus).